The chain runs to 149 residues: Sec-independent protein translocase protein TatB (149 aa).

Residues 1–22 (MFDGIGFMELLLIGVLGLIVLG) form a helical membrane-spanning segment. The span at 86-113 (LKQAAQSVNRPYQVQDTPSAQDNQIHNP) shows a compositional bias: polar residues. Residues 86-149 (LKQAAQSVNR…DPRSNTKANG (64 aa)) form a disordered region. The segment covering 114–135 (ASQTVSTEASSTSASSAPKSES) has biased composition (low complexity).

This sequence belongs to the TatB family. As to quaternary structure, the Tat system comprises two distinct complexes: a TatABC complex, containing multiple copies of TatA, TatB and TatC subunits, and a separate TatA complex, containing only TatA subunits. Substrates initially bind to the TatABC complex, which probably triggers association of the separate TatA complex to form the active translocon.

The protein resides in the cell inner membrane. Part of the twin-arginine translocation (Tat) system that transports large folded proteins containing a characteristic twin-arginine motif in their signal peptide across membranes. Together with TatC, TatB is part of a receptor directly interacting with Tat signal peptides. TatB may form an oligomeric binding site that transiently accommodates folded Tat precursor proteins before their translocation. The sequence is that of Sec-independent protein translocase protein TatB from Shewanella oneidensis (strain ATCC 700550 / JCM 31522 / CIP 106686 / LMG 19005 / NCIMB 14063 / MR-1).